Here is a 458-residue protein sequence, read N- to C-terminus: Kelch repeat and BTB domain-containing protein 13 (458 aa).

Positions valine 7–alanine 74 constitute a BTB domain. Kelch repeat units lie at residues alanine 159–asparagine 209, lysine 210–glycine 258, arginine 259–glycine 305, leucine 307–arginine 350, and serine 352–glycine 400.

As to quaternary structure, component of the BCR(KBTBD13) E3 ubiquitin ligase complex, at least composed of CUL3 and KBTBD13 and RBX1. Interacts with CUL3. Autoubiquitinated. Expressed in skeletal muscle, heart and lung.

It localises to the cytoplasm. Its pathway is protein modification; protein ubiquitination. Its function is as follows. Substrate-specific adapter of a BCR (BTB-CUL3-RBX1) E3 ubiquitin ligase complex. The polypeptide is Kelch repeat and BTB domain-containing protein 13 (Kbtbd13) (Mus musculus (Mouse)).